We begin with the raw amino-acid sequence, 581 residues long: FAD-dependent monooxygenase DEP4 (581 aa).

Residue valine 43–lysine 46 coordinates FAD. NADP(+) is bound at residue phenylalanine 54–glutamine 56. FAD is bound at residue valine 108. Residues valine 183–arginine 202, alanine 219–proline 220, and aspartate 351–isoleucine 352 each bind NADP(+). Methionine 470 provides a ligand contact to FAD.

Belongs to the FAD-binding monooxygenase family. Requires FAD as cofactor.

It participates in polyketide biosynthesis. Its function is as follows. FAD-dependent monooxygenase; part of the gene cluster that mediates the biosynthesis of depudecin, a highly oxidized eleven-carbon linear polyketide that acts as a histone deacetylase (HDAC) inhibitor and makes a small contribution to pathogenesis. The reducing polyketide synthase DEP5 is the central enzyme in depudecin biosynthesis by yielding the backbone polyketide chain. The monooxygenases DEP2 and DEP4, as well as the uncharacterized protein DEP1, then act as tailoring enzymes to modify the intermediate polyketide chain into depudecin. The protein is FAD-dependent monooxygenase DEP4 of Alternaria brassicicola (Dark leaf spot agent).